A 360-amino-acid chain; its full sequence is Nucleoporin SEH1 (360 aa).

WD repeat units follow at residues 10 to 49 (DHKDLIHDVSFDFHGRRMATCSSDQSVKVWDKSENGDWHC), 55 to 96 (THSG…SNDK), 111 to 152 (DSRT…NLSQ), 160 to 210 (SCKL…RKYA), 217 to 258 (SVSD…KELS), and 276 to 315 (NHNSQVWRVSWNITGTVLASSGDDGTVRLWKANYMDNWKC).

It belongs to the WD repeat SEC13 family. In terms of assembly, component of the Nup107-160 subcomplex of the nuclear pore complex (NPC). The Nup107-160 subcomplex includes NUP160, NUP133, NUP107, NUP98, NUP85, NUP43, NUP37, SEH1 and SEC13. Component of the GATOR2 subcomplex, composed of MIOS, SEC13, SEH1L, WDR24 and WDR59. The GATOR2 complex interacts with CASTOR1 and CASTOR2; the interaction is negatively regulated by arginine. The GATOR2 complex interacts with SESN1, SESN2 and SESN3; the interaction is negatively regulated by amino acids.

The protein localises to the chromosome. It localises to the centromere. It is found in the kinetochore. Its subcellular location is the nucleus. The protein resides in the nuclear pore complex. The protein localises to the lysosome membrane. With respect to regulation, the GATOR2 complex is negatively regulated by the upstream amino acid sensors CASTOR1 and SESN2, which sequester the GATOR2 complex in absence of amino acids. In the presence of abundant amino acids, GATOR2 is released from CASTOR1 and SESN2 and activated. Functionally, component of the Nup107-160 subcomplex of the nuclear pore complex (NPC). The Nup107-160 subcomplex is required for the assembly of a functional NPC. The Nup107-160 subcomplex is also required for normal kinetochore microtubule attachment, mitotic progression and chromosome segregation. This subunit plays a role in recruitment of the Nup107-160 subcomplex to the kinetochore. In terms of biological role, as a component of the GATOR2 complex, functions as an activator of the amino acid-sensing branch of the mTORC1 signaling pathway. The GATOR2 complex indirectly activates mTORC1 through the inhibition of the GATOR1 subcomplex. GATOR2 probably acts as an E3 ubiquitin-protein ligase toward GATOR1. In the presence of abundant amino acids, the GATOR2 complex mediates ubiquitination of the NPRL2 core component of the GATOR1 complex, leading to GATOR1 inactivation. In the absence of amino acids, GATOR2 is inhibited, activating the GATOR1 complex. The protein is Nucleoporin SEH1 (seh1l) of Xenopus tropicalis (Western clawed frog).